Here is a 179-residue protein sequence, read N- to C-terminus: MARLKEIYRNEIAPKLKEELKLSNVMEVPRVTKITLNMGLGEAIGDKKVIEHAVADLEKITGQKPVVTFARKSIAGFKVREGWPIGVKVTLRREKMYEFLDRLLAISLPRVRDFRGLNAKSFDGRGNYSMGVKEQIIFPEIDYDKIDALRGLDITLTTTARSDDEGRALLRAFKFPFRN.

It belongs to the universal ribosomal protein uL5 family. As to quaternary structure, part of the 50S ribosomal subunit; part of the 5S rRNA/L5/L18/L25 subcomplex. Contacts the 5S rRNA and the P site tRNA. Forms a bridge to the 30S subunit in the 70S ribosome.

This is one of the proteins that bind and probably mediate the attachment of the 5S RNA into the large ribosomal subunit, where it forms part of the central protuberance. In the 70S ribosome it contacts protein S13 of the 30S subunit (bridge B1b), connecting the 2 subunits; this bridge is implicated in subunit movement. Contacts the P site tRNA; the 5S rRNA and some of its associated proteins might help stabilize positioning of ribosome-bound tRNAs. The chain is Large ribosomal subunit protein uL5 from Pseudomonas putida (strain W619).